The chain runs to 261 residues: Flagellar L-ring protein (261 aa).

The N-terminal stretch at 1–15 (MKRLLCLLLLTTLTG) is a signal peptide. A lipid anchor (N-palmitoyl cysteine) is attached at C16. C16 carries the S-diacylglycerol cysteine lipid modification. The segment covering 121 to 133 (KSADAELSKKNDS) has biased composition (basic and acidic residues). Positions 121–140 (KSADAELSKKNDSSMDPLQV) are disordered.

The protein belongs to the FlgH family. In terms of assembly, the basal body constitutes a major portion of the flagellar organelle and consists of four rings (L,P,S, and M) mounted on a central rod.

It is found in the cell outer membrane. The protein resides in the bacterial flagellum basal body. Assembles around the rod to form the L-ring and probably protects the motor/basal body from shearing forces during rotation. This chain is Flagellar L-ring protein, found in Aliivibrio salmonicida (strain LFI1238) (Vibrio salmonicida (strain LFI1238)).